A 325-amino-acid polypeptide reads, in one-letter code: DNA-directed RNA polymerase subunit alpha (325 aa).

Positions M1–E238 are alpha N-terminal domain (alpha-NTD). The tract at residues L255 to F325 is alpha C-terminal domain (alpha-CTD).

Belongs to the RNA polymerase alpha chain family. As to quaternary structure, homodimer. The RNAP catalytic core consists of 2 alpha, 1 beta, 1 beta' and 1 omega subunit. When a sigma factor is associated with the core the holoenzyme is formed, which can initiate transcription.

It carries out the reaction RNA(n) + a ribonucleoside 5'-triphosphate = RNA(n+1) + diphosphate. In terms of biological role, DNA-dependent RNA polymerase catalyzes the transcription of DNA into RNA using the four ribonucleoside triphosphates as substrates. The sequence is that of DNA-directed RNA polymerase subunit alpha from Leptospira interrogans serogroup Icterohaemorrhagiae serovar copenhageni (strain Fiocruz L1-130).